A 481-amino-acid chain; its full sequence is Glutamate--tRNA ligase (481 aa).

The 'HIGH' region motif lies at Pro-11–Asn-21. Positions Lys-255–Arg-259 match the 'KMSKS' region motif. Position 258 (Lys-258) interacts with ATP.

This sequence belongs to the class-I aminoacyl-tRNA synthetase family. Glutamate--tRNA ligase type 1 subfamily. Monomer.

It localises to the cytoplasm. The enzyme catalyses tRNA(Glu) + L-glutamate + ATP = L-glutamyl-tRNA(Glu) + AMP + diphosphate. Its function is as follows. Catalyzes the attachment of glutamate to tRNA(Glu) in a two-step reaction: glutamate is first activated by ATP to form Glu-AMP and then transferred to the acceptor end of tRNA(Glu). The chain is Glutamate--tRNA ligase from Streptococcus pyogenes serotype M4 (strain MGAS10750).